The primary structure comprises 96 residues: Bacterial microcompartment shell protein EutM (96 aa).

The BMC domain maps to alanine 3 to proline 87.

The protein belongs to the bacterial microcompartments protein family. As to quaternary structure, homohexamer with a central pore of up to 8.6 Angstroms diameter. The hexamers pack into a two-dimensional array. Interacts with EutQ; a probably cytoplasm-facing helix (Val-49 to Gln-64) interacts with N-terminus of EutQ.

The protein localises to the bacterial microcompartment. Its pathway is amine and polyamine degradation; ethanolamine degradation. In terms of biological role, probably a major component of the bacterial microcompartment (BMC) shell dedicated to ethanolamine degradation. Each homohexamer has a central pore with an opening of up to 8.6 Angstroms. A positively-charged funnel leads to the pore from each side of the hexamer. The pore probably allows metabolite passage into and out of the BMC. Expression of eutK, eutL, eutM, eutN, eutS (eutSMNLK) in E.coli leads to formation of a single BMC. Expression alone leads to thick filaments that interfere with cell separation. Coexpression of eutQ with eutSMNLK permits E.coli to make cells with more than one mobile BMC, as is usual in vivo. May play a role in BMC shell biogenesis. Can replace homolog pduA in the pdu operon, cells grow better than wild-type on 1,2-propanediol and vitamin B12. Protein is incorporated into the pdu BMC microcompartment. Functionally, the ethanolamine (EA) catabolic bacterial microcompartment (BMC) probably concentrates low levels of ethanolamine catabolic enzymes, concentrates volatile reaction intermediates, keeps the level of toxic acetaldehyde low, generates enough acetyl-CoA to support cell growth, and maintains a pool of free coenzyme A (CoA) and NAD. Deletion of BMC genes (eutK, eutL, eutM) restores growth of eutD deletions, suggesting there are dedicated pools of coenzyme A (CoA) and NAD in the BMC. Expression of the eut operon allows this bacteria to use ethanolamine as a carbon, nitrogen and energy source. It relies on cobalamin (vitamin B12) both as a cofactor for the ethanolamine ammonia-lyase (EAL) activity and to induce the operon. EA enhances bacterial survival in macrophages in a concentration-dependent manner, suggesting it is an important nutrient during infection. The sequence is that of Bacterial microcompartment shell protein EutM from Salmonella typhimurium (strain LT2 / SGSC1412 / ATCC 700720).